The following is a 1620-amino-acid chain: Putative zinc carboxypeptidase (1620 aa).

Residues 1-1367 lie on the Extracellular side of the membrane; sequence MLFKNEDSGN…SYDFLYFDEN (1367 aa). A glycan (N-linked (GlcNAc...) asparagine) is linked at Asn19. Positions 32-74 are disordered; that stretch reads RNDNKNNDNEDNKQDDEEKNDEDDNKSNLLLEENEENKRQGDK. The segment covering 33–43 has biased composition (basic and acidic residues); it reads NDNKNNDNEDN. Over residues 44 to 55 the composition is skewed to acidic residues; the sequence is KQDDEEKNDEDD. Asn56 and Asn102 each carry an N-linked (GlcNAc...) asparagine glycan. Residues 309-328 are disordered; the sequence is GNHYDAHESTNTYDEEKTRE. Asn354, Asn487, Asn508, Asn529, Asn550, Asn571, Asn589, Asn687, Asn802, and Asn1010 each carry an N-linked (GlcNAc...) asparagine glycan. Residues 497 to 559 form a possible malaria epitope region; it reads VNNLDSTVNY…NSTGNNINNI (63 aa). A Peptidase M14 domain is found at 1004 to 1261; sequence GENKKNNGTK…FYVQNYFEGY (258 aa). Positions 1059 and 1062 each coordinate Zn(2+). N-linked (GlcNAc...) asparagine glycosylation is found at Asn1064 and Asn1141. A Zn(2+)-binding site is contributed by His1155. Glu1229 acts as the Proton donor/acceptor in catalysis. The interval 1279-1329 is disordered; sequence NIKGDDNINGDDNIKGGDNIKGDDNIKRDDNFQRDDNFQRDDNFQRGDNFH. The chain crosses the membrane as a helical span at residues 1368–1388; the sequence is LLFMTGVSFGICLFKFINFLS. The Cytoplasmic segment spans residues 1389-1620; that stretch reads YHKSSICRRT…SKRKKVIVIL (232 aa). A disordered region spans residues 1560 to 1620; sequence PNGKYKGPGF…SKRKKVIVIL (61 aa). A compositionally biased stretch (basic and acidic residues) spans 1581-1597; it reads NKNESKTEKKSKTENKS. Residues 1598 to 1620 are compositionally biased toward basic residues; sequence KSKSKNKSKSKNKSKRKKVIVIL.

This sequence belongs to the peptidase M14 family. Zn(2+) is required as a cofactor.

The protein resides in the membrane. This chain is Putative zinc carboxypeptidase, found in Plasmodium falciparum (isolate 3D7).